Consider the following 337-residue polypeptide: tRNA N6-adenosine threonylcarbamoyltransferase (337 aa).

Fe cation-binding residues include histidine 111 and histidine 115. Substrate-binding positions include 134–138 (LVSGG), aspartate 167, glycine 180, and asparagine 272. Residue aspartate 300 participates in Fe cation binding.

The protein belongs to the KAE1 / TsaD family. Fe(2+) serves as cofactor.

It localises to the cytoplasm. The enzyme catalyses L-threonylcarbamoyladenylate + adenosine(37) in tRNA = N(6)-L-threonylcarbamoyladenosine(37) in tRNA + AMP + H(+). Functionally, required for the formation of a threonylcarbamoyl group on adenosine at position 37 (t(6)A37) in tRNAs that read codons beginning with adenine. Is involved in the transfer of the threonylcarbamoyl moiety of threonylcarbamoyl-AMP (TC-AMP) to the N6 group of A37, together with TsaE and TsaB. TsaD likely plays a direct catalytic role in this reaction. The protein is tRNA N6-adenosine threonylcarbamoyltransferase of Escherichia coli (strain K12 / MC4100 / BW2952).